A 214-amino-acid chain; its full sequence is rRNA methyltransferase 2, mitochondrial (214 aa).

The transit peptide at 1-18 (MFSTKKSQGNLHKYIQRQ) directs the protein to the mitochondrion. S-adenosyl-L-methionine is bound by residues 63 to 66 (PGSW), aspartate 83, 100 to 101 (DI), and aspartate 125. The active-site Proton acceptor is the lysine 169.

It belongs to the class I-like SAM-binding methyltransferase superfamily. RNA methyltransferase RlmE family.

The protein resides in the mitochondrion. It carries out the reaction a uridine in rRNA + S-adenosyl-L-methionine = a 2'-O-methyluridine in rRNA + S-adenosyl-L-homocysteine + H(+). Functionally, S-adenosyl-L-methionine-dependent 2'-O-ribose methyltransferase that catalyzes the formation of 2'-O-methyluridine at position 808 (Um808) in the mitochondrial large subunit ribosomal RNA (mtLSU rRNA), a universally conserved modification in the peptidyl transferase domain of the mtLSU rRNA. This activity may require prior 2'-O-methylguanosine modification at position 809 (Gm809) by MRM3. Essential for late-stage assembly of mtLSU required for efficient translation of mitochondrial DNA encoded proteins; methyltransferase activity is not required for this function. Essential for mitochondrial respiratory function. The sequence is that of rRNA methyltransferase 2, mitochondrial from Caenorhabditis elegans.